A 175-amino-acid chain; its full sequence is Disulfide bond formation protein B (175 aa).

The Cytoplasmic portion of the chain corresponds to M1 to S13. Residues W14–Y30 form a helical membrane-spanning segment. Over F31–L48 the chain is Periplasmic. C40 and C43 are disulfide-bonded. A helical transmembrane segment spans residues A49–P64. Over K65–I71 the chain is Cytoplasmic. A helical membrane pass occupies residues L72–L89. Topologically, residues A90–E144 are periplasmic. A disulfide bond links C104 and C130. The chain crosses the membrane as a helical span at residues W145–P163. The Cytoplasmic segment spans residues I164–K175.

Belongs to the DsbB family.

It localises to the cell inner membrane. Required for disulfide bond formation in some periplasmic proteins. Acts by oxidizing the DsbA protein. In Shewanella sp. (strain MR-4), this protein is Disulfide bond formation protein B.